We begin with the raw amino-acid sequence, 167 residues long: Brain ribonuclease (167 aa).

The N-terminal stretch at M1–G26 is a signal peptide. Substrate is bound by residues K33 and R36. Residue H38 is the Proton acceptor of the active site. Cystine bridges form between C52–C110, C66–C121, C84–C136, and C91–C98. Position 67–71 (K67–T71) interacts with substrate. An N-linked (GlcNAc...) asparagine glycan is attached at N88. Substrate-binding residues include K92 and R111. The active-site Proton donor is H145. O-linked (GalNAc...) threonine glycosylation is present at T155. The O-linked (GalNAc...) serine glycan is linked to S159.

It belongs to the pancreatic ribonuclease family.

It localises to the secreted. The sequence is that of Brain ribonuclease (BRN) from Bos taurus (Bovine).